A 644-amino-acid polypeptide reads, in one-letter code: Macrolide export ATP-binding/permease protein MacB (644 aa).

Residues 4–242 (IECKNINRCF…SNVGRIREKA (239 aa)) enclose the ABC transporter domain. Residue 40-47 (GQSGSGKS) participates in ATP binding. Helical transmembrane passes span 270–290 (LLTM…VALG), 524–544 (IALI…LVSV), 574–594 (LICI…SLVF), and 607–627 (AASV…FGFM).

It belongs to the ABC transporter superfamily. Macrolide exporter (TC 3.A.1.122) family. Homodimer.

The protein localises to the cell inner membrane. Its function is as follows. Non-canonical ABC transporter that contains transmembrane domains (TMD), which form a pore in the inner membrane, and an ATP-binding domain (NBD), which is responsible for energy generation. Confers resistance against macrolides. This chain is Macrolide export ATP-binding/permease protein MacB, found in Neisseria gonorrhoeae (strain ATCC 700825 / FA 1090).